The following is an 849-amino-acid chain: Thrombospondin type-1 domain-containing protein 1 (849 aa).

Residues 1–24 (MKQTLKDFSNLLLVVLCDYVLGEA) form the signal peptide. Topologically, residues 25-413 (EHLVLGEPGH…QPQAPVKSNN (389 aa)) are extracellular. N-linked (GlcNAc...) asparagine glycans are attached at residues asparagine 39, asparagine 50, asparagine 55, asparagine 66, asparagine 77, asparagine 106, and asparagine 303. One can recognise a TSP type-1 domain in the interval 340–393 (IETWGLWQPWSQCSASCGDGVRERRRVCLTSSPSRPGCPGMSSETSPCSLEDCA). Intrachain disulfides connect cysteine 352–cysteine 387, cysteine 356–cysteine 392, and cysteine 367–cysteine 377. A helical transmembrane segment spans residues 414–434 (VVTVTGISLCLFIIVATVLIT). Residues 435–849 (LWRKLGRAPK…STLSVEKLVI (415 aa)) lie on the Cytoplasmic side of the membrane. The residue at position 463 (serine 463) is a Phosphoserine. Disordered regions lie at residues 472–516 (SEPR…SESF), 595–799 (KSPF…KCQS), and 828–849 (GYFG…KLVI). The span at 479–493 (SDAGDGPAGSPGDPG) shows a compositional bias: low complexity. A compositionally biased stretch (basic residues) spans 636-651 (SQVRSHSRGSHFRRTA). The segment covering 652–666 (SFHEARQARPFRERS) has biased composition (basic and acidic residues). Residues 720–732 (SPLPKPHSLGPPP) are compositionally biased toward pro residues.

In terms of assembly, part of a complex composed of THSD1, PTK2/FAK1, TLN1 and VCL. Interacts with TLN1.

The protein resides in the endosome membrane. Its subcellular location is the cell junction. The protein localises to the focal adhesion. Its function is as follows. Is a positive regulator of nascent focal adhesion assembly, involved in the modulation of endothelial cell attachment to the extracellular matrix. In Bos taurus (Bovine), this protein is Thrombospondin type-1 domain-containing protein 1 (THSD1).